Here is a 437-residue protein sequence, read N- to C-terminus: Amino-acid acetyltransferase (437 aa).

The 141-residue stretch at 289 to 429 folds into the N-acetyltransferase domain; it reads ENIRLATSFD…EHYNYQRMSK (141 aa).

The protein belongs to the acetyltransferase family. ArgA subfamily.

The protein resides in the cytoplasm. The catalysed reaction is L-glutamate + acetyl-CoA = N-acetyl-L-glutamate + CoA + H(+). It participates in amino-acid biosynthesis; L-arginine biosynthesis; N(2)-acetyl-L-ornithine from L-glutamate: step 1/4. This chain is Amino-acid acetyltransferase, found in Actinobacillus pleuropneumoniae serotype 5b (strain L20).